The primary structure comprises 354 residues: Rhodopsin (354 aa).

Residues 1 to 36 (MNGTEGPYFYIPMLNTTGVVRSPYEYPQYYLVNPAA) are Extracellular-facing. Residues Asn2 and Asn15 are each glycosylated (N-linked (GlcNAc...) asparagine). The helical transmembrane segment at 37–61 (YAVLGAYMFFLILVGFPINFLTLYV) threads the bilayer. Residues 62–73 (TIEHKKLRTPLN) lie on the Cytoplasmic side of the membrane. A helical transmembrane segment spans residues 74–96 (YILLNLAVADLFMVFGGFTTTIY). At 97–110 (TSMHGYFVLGRLGC) the chain is on the extracellular side. A disulfide bridge connects residues Cys110 and Cys187. A helical transmembrane segment spans residues 111–133 (NVEGFSATLGGEIALWSLVVLAI). A 'Ionic lock' involved in activated form stabilization motif is present at residues 134-136 (ERW). The Cytoplasmic segment spans residues 134–152 (ERWVVVCKPISNFRFGENH). Residues 153 to 173 (AIMGVAFTWFMAAACAVPPLF) traverse the membrane as a helical segment. At 174–202 (GWSRYIPEGMQCSCGIDYYTRAEGFNNES) the chain is on the extracellular side. An N-linked (GlcNAc...) asparagine glycan is attached at Asn200. Residues 203-224 (FVIYMFTCHFCIPLMVVFFCYG) traverse the membrane as a helical segment. The Cytoplasmic portion of the chain corresponds to 225–252 (RLVCAVKEAAAAQQESETTQRAEREVTR). A helical membrane pass occupies residues 253 to 274 (MVIIMVVSFLVSWVPYASVAWY). Topologically, residues 275–286 (IFTHQGSEFGPL) are extracellular. A helical membrane pass occupies residues 287-308 (FMTIPAFFAKSSSIYNPMIYIC). Lys296 bears the N6-(retinylidene)lysine mark. Over 309 to 354 (MNKQFRHCMITTLCCGKNPFEEEEGASSTASKTEASSVSSSSVSPA) the chain is Cytoplasmic. Residues Cys322 and Cys323 are each lipidated (S-palmitoyl cysteine). Residues 329–354 (EEEEGASSTASKTEASSVSSSSVSPA) are disordered. Positions 334 to 354 (ASSTASKTEASSVSSSSVSPA) are enriched in low complexity.

This sequence belongs to the G-protein coupled receptor 1 family. Opsin subfamily. Phosphorylated on some or all of the serine and threonine residues present in the C-terminal region. Post-translationally, contains one covalently linked retinal chromophore.

The protein localises to the membrane. The protein resides in the cell projection. It is found in the cilium. Its subcellular location is the photoreceptor outer segment. In terms of biological role, photoreceptor required for image-forming vision at low light intensity. While most salt water fish species use retinal as chromophore, most freshwater fish use 3-dehydroretinal, or a mixture of retinal and 3-dehydroretinal. Light-induced isomerization of 11-cis to all-trans retinal triggers a conformational change that activates signaling via G-proteins. Subsequent receptor phosphorylation mediates displacement of the bound G-protein alpha subunit by arrestin and terminates signaling. The polypeptide is Rhodopsin (rho) (Atherina boyeri (Big-scale sand smelt)).